We begin with the raw amino-acid sequence, 670 residues long: Segment polarity protein dishevelled homolog DVL-1 (670 aa).

In terms of domain architecture, DIX spans 1-85; sequence MAETKIIYHM…RVVSWLVLAE (85 aa). The tract at residues 89–237 is disordered; sequence SDAGSQGTDS…LRQADRASSF (149 aa). The span at 142 to 151 shows a compositional bias: basic residues; it reads SHRRERARRR. Basic and acidic residues predominate over residues 152 to 171; it reads NREEAARTNGHPRGDRRRDV. Low complexity predominate over residues 176–192; it reads DSASTALSSELESSSFV. Phosphoserine is present on Ser194. Over residues 200 to 214 the composition is skewed to low complexity; it reads TSRLSSSTEQSTSSR. A compositionally biased stretch (basic residues) spans 215 to 228; that stretch reads LIRKHKRRRRKQRL. The PDZ domain occupies 251–323; that stretch reads TVTLNMERHH…NDDAVRVLRE (73 aa). The 75-residue stretch at 400–474 folds into the DEP domain; it reads PDSGLEIRDR…SEQCYYVFGD (75 aa). The segment at 518-642 is disordered; sequence PGPPPCFPPA…PGGPPVRELA (125 aa). Residues 526–555 show a composition bias toward low complexity; that stretch reads PAYQDPGFSYGSGSTGSQQSEGSKSSGSTR. The span at 600-611 shows a compositional bias: polar residues; that stretch reads SRGSSPRSQASA.

The protein belongs to the DSH family. Interacts with CXXC4. Interacts (via PDZ domain) with NXN. Interacts with BRD7 and INVS. Interacts (via PDZ domain) with VANGL1 and VANGL2 (via C-terminus). Interacts with ARRB1; the interaction is enhanced by phosphorylation of DVL1. Interacts with CYLD. Interacts (via PDZ domain) with RYK. Self-associates (via DIX domain) and forms higher homooligomers. Interacts (via PDZ domain) with DACT1 and FZD7, where DACT1 and FZD7 compete for the same binding site. Interacts (via DEP domain) with MUSK; the interaction is direct and mediates the formation a DVL1, MUSK and PAK1 ternary complex involved in AChR clustering. Interacts (via PDZ domain) with TMEM88. Interacts with DCDC2. Interacts with FOXK2. Interacts with PKD1 (via extracellular domain). Interacts (via PDZ domain) with CCDC88C/DAPLE; competes with CCDC88C for binding to frizzled receptor FZD7 and dissociates from CCDC88C following initiation of non-canonical Wnt signaling when CCDC88C displaces DVL1 from ligand-activated FZD7. Ubiquitinated; undergoes both 'Lys-48'-linked ubiquitination, leading to its subsequent degradation by the ubiquitin-proteasome pathway, and 'Lys-63'-linked ubiquitination. The interaction with INVS is required for ubiquitination. Deubiquitinated by CYLD, which acts on 'Lys-63'-linked ubiquitin chains.

The protein resides in the cell membrane. It is found in the cytoplasm. It localises to the cytosol. The protein localises to the cytoplasmic vesicle. Its function is as follows. Participates in Wnt signaling by binding to the cytoplasmic C-terminus of frizzled family members and transducing the Wnt signal to down-stream effectors. Plays a role both in canonical and non-canonical Wnt signaling. Plays a role in the signal transduction pathways mediated by multiple Wnt genes. Required for LEF1 activation upon WNT1 and WNT3A signaling. DVL1 and PAK1 form a ternary complex with MUSK which is important for MUSK-dependent regulation of AChR clustering during the formation of the neuromuscular junction (NMJ). This Pan troglodytes (Chimpanzee) protein is Segment polarity protein dishevelled homolog DVL-1 (DVL1).